Reading from the N-terminus, the 399-residue chain is Brefeldin A resistance protein (399 aa).

Composition is skewed to basic and acidic residues over residues 1–31 (MTSKMENNKDESISTKNALEEKSNETKDETS), 49–69 (SKSEPLEDKGNAEVKEFKETT), and 101–130 (KVEEKELKVNKDVDENEGHVAVETGKKESA). 2 disordered regions span residues 1–173 (MTSK…FGAF) and 191–269 (KKFA…SEII). Low complexity predominate over residues 138-157 (SPFSQFASFSNASSPFSNVS). Composition is skewed to basic and acidic residues over residues 205-217 (SGKEKENDKKSSE) and 241-252 (TKSEPKEADKGS). Over residues 253–263 (GDSTKSTMHQL) the composition is skewed to polar residues. The 141-residue stretch at 256–396 (TKSTMHQLSD…VLEAIPKGGR (141 aa)) folds into the RanBD1 domain.

Post-translationally, phosphorylated.

The protein localises to the nucleus. This chain is Brefeldin A resistance protein (hba1), found in Schizosaccharomyces pombe (strain 972 / ATCC 24843) (Fission yeast).